The following is a 207-amino-acid chain: Small ribosomal subunit protein uS4 (207 aa).

One can recognise an S4 RNA-binding domain in the interval 97–165 (SRLDNLVFRM…VKLALESKAV (69 aa)).

Belongs to the universal ribosomal protein uS4 family. Part of the 30S ribosomal subunit. Contacts protein S5. The interaction surface between S4 and S5 is involved in control of translational fidelity.

One of the primary rRNA binding proteins, it binds directly to 16S rRNA where it nucleates assembly of the body of the 30S subunit. Functionally, with S5 and S12 plays an important role in translational accuracy. This is Small ribosomal subunit protein uS4 from Mycoplasmoides gallisepticum (strain R(low / passage 15 / clone 2)) (Mycoplasma gallisepticum).